The sequence spans 1053 residues: DIS3-like exonuclease 1 (1053 aa).

Positions 236–310 (AGIKSGRYIQ…KSEWKGRTAA (75 aa)) constitute a CSD1 domain. A disordered region spans residues 306 to 332 (GRTAALGENDSDDKASGESPSEPMPTG). Residues 365–431 (ILVTPWDYRI…GEIATILVEN (67 aa)) enclose the CSD2 domain. Residues 465-816 (RKDLRTTHLV…VHRLLMAAIS (352 aa)) form the RNB domain. Ser989 carries the post-translational modification Phosphoserine.

It belongs to the RNR ribonuclease family. Component of the RNA exosome complex. The catalytically inactive RNA exosome core (Exo-9) complex is believed to associate with catalytic subunits EXOSC10, and DIS3 or DIS3L in cytoplasmic- and nuclear-specific RNA exosome complex forms. It depends on Mg(2+) as a cofactor.

The protein resides in the cytoplasm. The catalysed reaction is Exonucleolytic cleavage in the 3'- to 5'-direction to yield nucleoside 5'-phosphates.. Functionally, catalytic component of the RNA exosome complex which has 3'-&gt;5' exoribonuclease activity and participates in a multitude of cellular RNA processing and degradation events. In the cytoplasm, the RNA exosome complex is involved in general mRNA turnover and specifically degrades inherently unstable mRNAs containing AU-rich elements (AREs) within their 3' untranslated regions, and in RNA surveillance pathways, preventing translation of aberrant mRNAs. It seems to be involved in degradation of histone mRNA. The polypeptide is DIS3-like exonuclease 1 (Dis3l) (Mus musculus (Mouse)).